The primary structure comprises 449 residues: Tryptophan synthase beta chain 2 (449 aa).

Residue K116 is modified to N6-(pyridoxal phosphate)lysine.

It belongs to the TrpB family. Tetramer of two alpha and two beta chains. Pyridoxal 5'-phosphate is required as a cofactor.

The enzyme catalyses (1S,2R)-1-C-(indol-3-yl)glycerol 3-phosphate + L-serine = D-glyceraldehyde 3-phosphate + L-tryptophan + H2O. It participates in amino-acid biosynthesis; L-tryptophan biosynthesis; L-tryptophan from chorismate: step 5/5. Its function is as follows. The beta subunit is responsible for the synthesis of L-tryptophan from indole and L-serine. The chain is Tryptophan synthase beta chain 2 (trpB2) from Aeropyrum pernix (strain ATCC 700893 / DSM 11879 / JCM 9820 / NBRC 100138 / K1).